The following is a 143-amino-acid chain: FIS1-related protein fis-1 (143 aa).

Residues 121 to 141 (LGLLGGAVAVVGGLVIAGLAF) form a helical membrane-spanning segment.

This sequence belongs to the FIS1 family.

The protein resides in the mitochondrion outer membrane. Its subcellular location is the peroxisome membrane. Involved in the fragmentation of the mitochondrial network. Involved in perinuclear clustering of the mitochondrial network. Plays a role in removal of ultraviolet C radiation-induced mitochondrial DNA damage. May act, redundantly with fis-2, downstream of mitochondrial fission, before the fission products participate in either mitochondrial homeostasis, mitophagy, or apoptosis. The protein is FIS1-related protein fis-1 of Caenorhabditis elegans.